The primary structure comprises 174 residues: Small ribosomal subunit protein uS5 (174 aa).

The S5 DRBM domain maps to Leu19 to Ile82.

Belongs to the universal ribosomal protein uS5 family. Part of the 30S ribosomal subunit. Contacts proteins S4 and S8.

With S4 and S12 plays an important role in translational accuracy. Functionally, located at the back of the 30S subunit body where it stabilizes the conformation of the head with respect to the body. The chain is Small ribosomal subunit protein uS5 from Albidiferax ferrireducens (strain ATCC BAA-621 / DSM 15236 / T118) (Rhodoferax ferrireducens).